Consider the following 262-residue polypeptide: MQVDADLRPILGPQLVRLDPMRVKQLQDPIVYEAIDNLAKLSAHCLQLRTPLTTCEKLINSDSTLYLSWKYDEEEKVSRLMGFAKVGRKKLFLYDSQMQTYEGEILCLLDFYVHFSCQRQGVGQQILDYMFSQEHTEPYQLALDNPSVTLLGFMSQKYGLIKPVWQNTNFVVFEELFLALSAENGIEKPPPDGWRRPMTPRRLGTGMTDTRWLQHAVSGHQSKGNAMAAPVDADMTPQGALSNRAHQAKARKAHILSSKPLW.

An N-acetyltransferase domain is found at 1 to 177; sequence MQVDADLRPI…TNFVVFEELF (177 aa). 111 to 124 contributes to the acetyl-CoA binding site; that stretch reads FYVHFSCQRQGVGQ.

The protein belongs to the acetyltransferase ATAT1 family. As to expression, expressed solely in touch receptor neurons.

It catalyses the reaction L-lysyl-[alpha-tubulin] + acetyl-CoA = N(6)-acetyl-L-lysyl-[alpha-tubulin] + CoA + H(+). In terms of biological role, specifically acetylates 'Lys-40' in alpha-tubulin/mec-12 on the lumenal side of microtubules. Promotes microtubule destabilization and accelerates microtubule dynamics; this activity may be independent of acetylation activity. Acetylates alpha-tubulin with a slow enzymatic rate, due to a catalytic site that is not optimized for acetyl transfer. Enters the microtubule through each end and diffuses quickly throughout the lumen of microtubules. Acetylates only long/old microtubules because of its slow acetylation rate since it does not have time to act on dynamically unstable microtubules before the enzyme is released. Required for the maintenance of touch receptor neurons and possibly other type of neurons involved in locomotion. Regulates the number and localization of mitochondria in mechanosensory neurons. Plays a role in axonal transport. The chain is Alpha-tubulin N-acetyltransferase 1 from Caenorhabditis elegans.